We begin with the raw amino-acid sequence, 205 residues long: Protein Nef (205 aa).

Gly2 is lipidated: N-myristoyl glycine; by host. Ser6 bears the Phosphoserine; by host mark. The acidic; interacts with host PACS1 and PACS2; stabilizes the interaction of NEF/MHC-I with host AP1M1; necessary for MHC-I internalization stretch occupies residues 62–65 (DNEE). The interval 69–78 (PVRPQVPTRP) is SH3-binding; interaction with Src family tyrosine kinases. The short motif at 72 to 75 (PQVP) is the PxxP; stabilizes the interaction of NEF/MHC-I with host AP1M1; necessary for MHC-I internalization element. Residues 108–124 (EILDLWVYHTQGFFPDW) are mediates dimerization, Nef-PTE1 interaction. The tract at residues 148–180 (LTEEQVEQANEGDNNCLLHPICQHGMEDEDKEV) is binding to ATP6V1H. The short motif at 164 to 165 (LL) is the Dileucine internalization motif; necessary for CD4 internalization element. Residues 174 to 175 (ED) carry the Diacidic; necessary for CD4 internalization motif.

The protein belongs to the lentivirus primate group Nef protein family. As to quaternary structure, monomer; cytosolic form. Homodimer; membrane bound form. Interacts with Nef associated p21-activated kinase (PAK2); this interaction activates PAK2. Associates with the Nef-MHC-I-AP1 complex; this complex is required for MHC-I internalization. Interacts (via C-terminus) with host PI3-kinase. Interacts with host PACS1; this interaction seems to be weak. Interacts with host PACS2. Interacts with host LCK and MAPK3; these interactions inhibit the kinase activity of the latter. Interacts with host ATP6V1H; this interaction may play a role in CD4 endocytosis. Associates with the CD4-Nef-AP2 complex; this complex is required for CD4 internalization. Interacts with host AP2 subunit alpha and AP2 subunit sigma2. Interacts with TCR-zeta chain; this interaction up-regulates the Fas ligand (FasL) surface expression. Interacts with host HCK, LYN, and SRC; these interactions activate the Src family kinases. Interacts with MAP3K5; this interaction inhibits the Fas and TNFR-mediated death signals. Interacts with beta-COP and PTE1. Interacts with human RACK1; this increases Nef phosphorylation by PKC. Interacts with TP53; this interaction decreases the half-life of TP53, protecting the infected cell against p53-mediated apoptosis. In terms of processing, the virion-associated Nef proteins are cleaved by the viral protease to release the soluble C-terminal core protein. Nef is probably cleaved concomitantly with viral structural proteins on maturation of virus particles. Post-translationally, myristoylated. Phosphorylated on serine residues, probably by host PKCdelta and theta.

It localises to the host cell membrane. The protein localises to the virion. The protein resides in the secreted. It is found in the host Golgi apparatus membrane. Functionally, factor of infectivity and pathogenicity, required for optimal virus replication. Alters numerous pathways of T-lymphocyte function and down-regulates immunity surface molecules in order to evade host defense and increase viral infectivity. Alters the functionality of other immunity cells, like dendritic cells, monocytes/macrophages and NK cells. Its function is as follows. In infected CD4(+) T-lymphocytes, down-regulates the surface MHC-I, mature MHC-II, CD4, CD28, CCR5 and CXCR4 molecules. Mediates internalization and degradation of host CD4 through the interaction of with the cytoplasmic tail of CD4, the recruitment of AP-2 (clathrin adapter protein complex 2), internalization through clathrin coated pits, and subsequent transport to endosomes and lysosomes for degradation. Diverts host MHC-I molecules to the trans-Golgi network-associated endosomal compartments by an endocytic pathway to finally target them for degradation. MHC-I down-regulation may involve AP-1 (clathrin adapter protein complex 1) or possibly Src family kinase-ZAP70/Syk-PI3K cascade recruited by PACS2. In consequence infected cells are masked for immune recognition by cytotoxic T-lymphocytes. Decreasing the number of immune receptors also prevents reinfection by more HIV particles (superinfection). Down-regulates host SERINC3 and SERINC5 thereby excluding these proteins from the viral particles. Virion infectivity is drastically higher when SERINC3 or SERINC5 are excluded from the viral envelope, because these host antiviral proteins impair the membrane fusion event necessary for subsequent virion penetration. Bypasses host T-cell signaling by inducing a transcriptional program nearly identical to that of anti-CD3 cell activation. Interaction with TCR-zeta chain up-regulates the Fas ligand (FasL). Increasing surface FasL molecules and decreasing surface MHC-I molecules on infected CD4(+) cells send attacking cytotoxic CD8+ T-lymphocytes into apoptosis. In terms of biological role, plays a role in optimizing the host cell environment for viral replication without causing cell death by apoptosis. Protects the infected cells from apoptosis in order to keep them alive until the next virus generation is ready to strike. Inhibits the Fas and TNFR-mediated death signals by blocking MAP3K5/ASK1. Decreases the half-life of TP53, protecting the infected cell against p53-mediated apoptosis. Inhibits the apoptotic signals regulated by the Bcl-2 family proteins through the formation of a Nef/PI3-kinase/PAK2 complex that leads to activation of PAK2 and induces phosphorylation of host BAD. Functionally, extracellular Nef protein targets CD4(+) T-lymphocytes for apoptosis by interacting with CXCR4 surface receptors. The chain is Protein Nef from Simian immunodeficiency virus (isolate CPZ GAB1) (SIV-cpz).